Reading from the N-terminus, the 299-residue chain is tRNA dimethylallyltransferase (299 aa).

An ATP-binding site is contributed by 13–20 (GPTASGKT). 15 to 20 (TASGKT) provides a ligand contact to substrate. An interaction with substrate tRNA region spans residues 38–41 (DSRQ).

The protein belongs to the IPP transferase family. Monomer. The cofactor is Mg(2+).

The catalysed reaction is adenosine(37) in tRNA + dimethylallyl diphosphate = N(6)-dimethylallyladenosine(37) in tRNA + diphosphate. In terms of biological role, catalyzes the transfer of a dimethylallyl group onto the adenine at position 37 in tRNAs that read codons beginning with uridine, leading to the formation of N6-(dimethylallyl)adenosine (i(6)A). This is tRNA dimethylallyltransferase from Prochlorococcus marinus (strain MIT 9301).